The primary structure comprises 379 residues: Cobalt-precorrin-5B C(1)-methyltransferase (379 aa).

This sequence belongs to the CbiD family.

It catalyses the reaction Co-precorrin-5B + S-adenosyl-L-methionine = Co-precorrin-6A + S-adenosyl-L-homocysteine. Its pathway is cofactor biosynthesis; adenosylcobalamin biosynthesis; cob(II)yrinate a,c-diamide from sirohydrochlorin (anaerobic route): step 6/10. Catalyzes the methylation of C-1 in cobalt-precorrin-5B to form cobalt-precorrin-6A. This chain is Cobalt-precorrin-5B C(1)-methyltransferase, found in Salmonella typhimurium (strain LT2 / SGSC1412 / ATCC 700720).